The sequence spans 225 residues: Ribosomal RNA small subunit methyltransferase G (225 aa).

S-adenosyl-L-methionine contacts are provided by residues Gly89, Leu94, 140 to 141 (IE), and Arg157.

Belongs to the methyltransferase superfamily. RNA methyltransferase RsmG family.

It localises to the cytoplasm. It catalyses the reaction guanosine(527) in 16S rRNA + S-adenosyl-L-methionine = N(7)-methylguanosine(527) in 16S rRNA + S-adenosyl-L-homocysteine. Specifically methylates the N7 position of guanine in position 527 of 16S rRNA. In Psychrobacter sp. (strain PRwf-1), this protein is Ribosomal RNA small subunit methyltransferase G.